We begin with the raw amino-acid sequence, 137 residues long: Phosphomevalonate dehydratase small subunit (137 aa).

Ser65 serves as the catalytic Proton acceptor.

The protein belongs to the AcnX type II small subunit family. In terms of assembly, heterodimer composed of a large subunit (PMDh-L) and a small subunit (PMDh-S).

The catalysed reaction is (R)-5-phosphomevalonate = (2E)-3-methyl-5-phosphooxypent-2-enoate + H2O. It participates in isoprenoid biosynthesis; isopentenyl diphosphate biosynthesis via mevalonate pathway. Its function is as follows. Component of a hydro-lyase that catalyzes the dehydration of mevalonate 5-phosphate (MVA5P) to form trans-anhydromevalonate 5-phosphate (tAHMP). Involved in the archaeal mevalonate (MVA) pathway, which provides fundamental precursors for isoprenoid biosynthesis, such as isopentenyl diphosphate (IPP) and dimethylallyl diphosphate (DMAPP). In Methanococcoides burtonii (strain DSM 6242 / NBRC 107633 / OCM 468 / ACE-M), this protein is Phosphomevalonate dehydratase small subunit.